The following is a 285-amino-acid chain: Bifunctional protein FolD (285 aa).

NADP(+) contacts are provided by residues 166–168 (GRS), serine 191, and isoleucine 232.

It belongs to the tetrahydrofolate dehydrogenase/cyclohydrolase family. In terms of assembly, homodimer.

The enzyme catalyses (6R)-5,10-methylene-5,6,7,8-tetrahydrofolate + NADP(+) = (6R)-5,10-methenyltetrahydrofolate + NADPH. The catalysed reaction is (6R)-5,10-methenyltetrahydrofolate + H2O = (6R)-10-formyltetrahydrofolate + H(+). It participates in one-carbon metabolism; tetrahydrofolate interconversion. Functionally, catalyzes the oxidation of 5,10-methylenetetrahydrofolate to 5,10-methenyltetrahydrofolate and then the hydrolysis of 5,10-methenyltetrahydrofolate to 10-formyltetrahydrofolate. The chain is Bifunctional protein FolD from Rickettsia typhi (strain ATCC VR-144 / Wilmington).